The primary structure comprises 133 residues: Capsid protein (133 aa).

Belongs to the Leviviricetes capsid protein family. As to quaternary structure, homodimer. The homodimers binds to the viral RNA via an operator hairpin, but also to many other RNA sequences in the viral genome; this interaction probably shifts the virus from the replicative to the assembly phase and ensures specific encapsidation of the viral genome. Interacts with the maturation protein A2.

It localises to the virion. In terms of biological role, capsid protein self-assembles to form an icosahedral capsid with a T=3 symmetry, about 26 nm in diameter, and consisting of 89 capsid proteins dimers (178 capsid proteins). Involved in viral genome encapsidation through the interaction between a capsid protein dimer and the multiple packaging signals present in the RNA genome. Binding of the capsid proteins to the viral RNA induces a conformational change required for efficient T=3 shell formation. The capsid also contains 1 copy of the A2 maturation protein. Its function is as follows. Acts as a translational repressor of viral replicase synthesis late in infection. This latter function is the result of capsid protein interaction with an RNA hairpin which contains the replicase ribosome-binding site. The polypeptide is Capsid protein (Escherichia virus Qbeta (Bacteriophage Q-beta)).